Consider the following 469-residue polypeptide: Tubulin gamma chain (469 aa).

142–148 contributes to the GTP binding site; the sequence is AGGTGSG.

This sequence belongs to the tubulin family.

It is found in the cytoplasm. It localises to the cytoskeleton. The protein resides in the microtubule organizing center. The protein localises to the spindle pole body. Functionally, tubulin is the major constituent of microtubules. The gamma chain is found at microtubule organizing centers (MTOC) such as the spindle poles or the centrosome, suggesting that it is involved in the minus-end nucleation of microtubule assembly. This is Tubulin gamma chain (TUB4) from Microbotryum violaceum (Anther smut fungus).